The chain runs to 188 residues: Josephin-2 (188 aa).

The 178-residue stretch at 11–188 folds into the Josephin domain; that stretch reads PPSVYHERQR…EEAGCWLNTS (178 aa). C24 (nucleophile) is an active-site residue. The active-site Proton acceptor is H125.

It is found in the cytoplasm. Its subcellular location is the cytosol. The enzyme catalyses Thiol-dependent hydrolysis of ester, thioester, amide, peptide and isopeptide bonds formed by the C-terminal Gly of ubiquitin (a 76-residue protein attached to proteins as an intracellular targeting signal).. Its function is as follows. Cleaves 'Lys-63'-linked poly-ubiquitin chains, and with lesser efficiency 'Lys-48'-linked poly-ubiquitin chains (in vitro). May act as a deubiquitinating enzyme. This is Josephin-2 (Josd2) from Mus musculus (Mouse).